A 343-amino-acid chain; its full sequence is 4-hydroxyproline 2-epimerase 1 (343 aa).

Catalysis depends on serine 90, which acts as the Proton acceptor. Substrate contacts are provided by residues glycine 91–serine 92, aspartate 251, and glycine 256–threonine 257.

Belongs to the proline racemase family.

The catalysed reaction is trans-4-hydroxy-L-proline = cis-4-hydroxy-D-proline. Catalyzes the epimerization of trans-4-hydroxy-L-proline (t4LHyp) to cis-4-hydroxy-D-proline (c4DHyp) in vitro, albeit with low efficiency. The physiological substrate may be different. Displays no proline racemase activity. The sequence is that of 4-hydroxyproline 2-epimerase 1 from Brucella anthropi (strain ATCC 49188 / DSM 6882 / CCUG 24695 / JCM 21032 / LMG 3331 / NBRC 15819 / NCTC 12168 / Alc 37) (Ochrobactrum anthropi).